We begin with the raw amino-acid sequence, 451 residues long: Tryptophan--tRNA ligase (451 aa).

ATP-binding positions include 10–12 and 18–19; these read TTT and GN. The 'HIGH' region motif lies at 11–19; it reads TTGTPHLGN. D143 serves as a coordination point for L-tryptophan. Residues 155-157, L195, and 202-206 each bind ATP; these read GRD and KMSKS. The short motif at 202–206 is the 'KMSKS' region element; sequence KMSKS.

It belongs to the class-I aminoacyl-tRNA synthetase family. As to quaternary structure, homodimer.

It localises to the cytoplasm. The catalysed reaction is tRNA(Trp) + L-tryptophan + ATP = L-tryptophyl-tRNA(Trp) + AMP + diphosphate + H(+). Functionally, catalyzes the attachment of tryptophan to tRNA(Trp). This is Tryptophan--tRNA ligase from Bordetella bronchiseptica (strain ATCC BAA-588 / NCTC 13252 / RB50) (Alcaligenes bronchisepticus).